Here is a 557-residue protein sequence, read N- to C-terminus: Tektin-5 (557 aa).

Positions 302–386 form a coiled coil; the sequence is DNIRHAQNMR…LLERAIVAKE (85 aa). 6 consecutive repeat copies span residues 507–512, 513–518, 519–524, 525–530, 531–536, and 537–541. A 6 X 6 AA approximate tandem repeats of C-[GSK]-G-[GSPH]-A-[SLP] region spans residues 507–541; it reads CSGSALCKGPASCGGGASCGGGASCGGHAPCGSAL.

This sequence belongs to the tektin family. In terms of assembly, microtubule inner protein component of sperm flagellar doublet microtubules. Interacts with TEKT3. Ubiquitinated, leading to its degradation. Deubiquitinated by USP16, promoting its stability. In terms of tissue distribution, strongly expressed in germ cells of the testis (at protein level). Expressed in spermatozoa. Also detected in brain.

Its subcellular location is the cytoplasm. It localises to the cytoskeleton. The protein localises to the flagellum axoneme. Functionally, sperm-specific microtubule inner protein (MIP) part of the dynein-decorated doublet microtubules (DMTs) in flagellar axoneme. Forms an extensive interaction network in different conformations that reinforces the helix bundle composed by other tektin proteins (TEKT1 to TEKT4) and MIPs to anchor the tektin bundle onto the tubulin wall of A-tubule of the sperm flagellum. This chain is Tektin-5, found in Mus musculus (Mouse).